Here is a 341-residue protein sequence, read N- to C-terminus: MSTTADKIAVLGAGSWGTALASLLARHGHPTVLWGRDAAVVEAIDQRHENPRYLPGIPLPDSLRATTDLASAVEGAAWILVVTPSHAFGETVRALAPLRPAGAGVAWATKGFEPGSGRFLHEVAREVLGEDVPLAVVTGPSFAKEVTQGLPTAITVHGDVPEFAQMVAEAMHGPAFRAYTGDDMVGAELGGAMKNVLAVATGVADGMQLGLNARAGLITRGLNEMLRLAAAIGAKPETLMGLAGLGDLVLTCTGDLSRNRRLGLALGRGQTLQDAVREIGQVVESVQTADEVMRQARRHGIDLPISDRVRAVLHGEQTPEEGLRALLAREQKPEYPDTLFK.

NADPH contacts are provided by serine 15, tryptophan 16, arginine 36, and lysine 110. 3 residues coordinate sn-glycerol 3-phosphate: lysine 110, glycine 139, and serine 141. An NADPH-binding site is contributed by alanine 143. 5 residues coordinate sn-glycerol 3-phosphate: lysine 194, aspartate 247, serine 257, arginine 258, and asparagine 259. Lysine 194 functions as the Proton acceptor in the catalytic mechanism. Arginine 258 contributes to the NADPH binding site. NADPH-binding residues include valine 282 and glutamate 284.

This sequence belongs to the NAD-dependent glycerol-3-phosphate dehydrogenase family.

It localises to the cytoplasm. It carries out the reaction sn-glycerol 3-phosphate + NAD(+) = dihydroxyacetone phosphate + NADH + H(+). The enzyme catalyses sn-glycerol 3-phosphate + NADP(+) = dihydroxyacetone phosphate + NADPH + H(+). The protein operates within membrane lipid metabolism; glycerophospholipid metabolism. Its function is as follows. Catalyzes the reduction of the glycolytic intermediate dihydroxyacetone phosphate (DHAP) to sn-glycerol 3-phosphate (G3P), the key precursor for phospholipid synthesis. The chain is Glycerol-3-phosphate dehydrogenase [NAD(P)+] from Stenotrophomonas maltophilia (strain K279a).